A 358-amino-acid chain; its full sequence is 3-dehydroquinate synthase (358 aa).

NAD(+) contacts are provided by residues 102–106 (GVVGD), 126–127 (TT), Lys139, and Lys148. Positions 181, 244, and 260 each coordinate Zn(2+).

This sequence belongs to the sugar phosphate cyclases superfamily. Dehydroquinate synthase family. Co(2+) is required as a cofactor. Requires Zn(2+) as cofactor. NAD(+) serves as cofactor.

Its subcellular location is the cytoplasm. The catalysed reaction is 7-phospho-2-dehydro-3-deoxy-D-arabino-heptonate = 3-dehydroquinate + phosphate. The protein operates within metabolic intermediate biosynthesis; chorismate biosynthesis; chorismate from D-erythrose 4-phosphate and phosphoenolpyruvate: step 2/7. Catalyzes the conversion of 3-deoxy-D-arabino-heptulosonate 7-phosphate (DAHP) to dehydroquinate (DHQ). In Symbiobacterium thermophilum (strain DSM 24528 / JCM 14929 / IAM 14863 / T), this protein is 3-dehydroquinate synthase.